The sequence spans 295 residues: uncharacterized protein (295 aa).

Residues 1–19 form the signal peptide; it reads MRKLLLIITVFFTFNVAQA.

This is an uncharacterized protein from Rickettsia conorii (strain ATCC VR-613 / Malish 7).